The sequence spans 210 residues: Outer-membrane lipoprotein carrier protein (210 aa).

The first 23 residues, 1-23, serve as a signal peptide directing secretion; it reads MKKRIQKTILTVLFSSLSSIAFA.

Belongs to the LolA family. Monomer.

The protein resides in the periplasm. Its function is as follows. Participates in the translocation of lipoproteins from the inner membrane to the outer membrane. Only forms a complex with a lipoprotein if the residue after the N-terminal Cys is not an aspartate (The Asp acts as a targeting signal to indicate that the lipoprotein should stay in the inner membrane). In Haemophilus ducreyi (strain 35000HP / ATCC 700724), this protein is Outer-membrane lipoprotein carrier protein.